Consider the following 208-residue polypeptide: Small ribosomal subunit protein eS8 (208 aa).

Residues Met-1–Pro-40 are disordered. Positions Trp-8 to Lys-26 are enriched in basic residues.

This sequence belongs to the eukaryotic ribosomal protein eS8 family. As to quaternary structure, component of the small ribosomal subunit.

It is found in the cytoplasm. In terms of biological role, component of the small ribosomal subunit. The ribosome is a large ribonucleoprotein complex responsible for the synthesis of proteins in the cell. The sequence is that of Small ribosomal subunit protein eS8 (rps8) from Ictalurus punctatus (Channel catfish).